A 227-amino-acid chain; its full sequence is PKHD-type hydroxylase A1S_0473 (227 aa).

Residues 78 to 178 (KIIPPLFNRY…RFASFFWVQS (101 aa)) form the Fe2OG dioxygenase domain. Fe cation contacts are provided by histidine 96, aspartate 98, and histidine 159. Arginine 169 contributes to the 2-oxoglutarate binding site.

The cofactor is Fe(2+). Requires L-ascorbate as cofactor.

This is PKHD-type hydroxylase A1S_0473 from Acinetobacter baumannii (strain ATCC 17978 / DSM 105126 / CIP 53.77 / LMG 1025 / NCDC KC755 / 5377).